The following is a 92-amino-acid chain: MSNRRSRQTSNASRISDDQMIDLVSKLRQFLPEIHERRRSDKVSASKVLQETCNYIRKLHREVDNLSDRLSQLLDSVDEDSPEAAVIRSLLM.

The 56-residue stretch at 4–59 (RRSRQTSNASRISDDQMIDLVSKLRQFLPEIHERRRSDKVSASKVLQETCNYIRKL) folds into the bHLH domain.

It belongs to the bHLH protein family. Interacts with IBH1.

It is found in the nucleus. Functionally, atypical and probable non DNA-binding bHLH transcription factor that integrates multiple signaling pathways to regulate cell elongation and plant development. May have a regulatory role in various aspects of gibberellin-dependent growth and development. This Arabidopsis thaliana (Mouse-ear cress) protein is Transcription factor PRE5 (PRE5).